The sequence spans 161 residues: Putative pre-16S rRNA nuclease (161 aa).

The segment at Ala142–Ala161 is disordered.

It belongs to the YqgF nuclease family.

It localises to the cytoplasm. Functionally, could be a nuclease involved in processing of the 5'-end of pre-16S rRNA. The sequence is that of Putative pre-16S rRNA nuclease from Clavibacter sepedonicus (Clavibacter michiganensis subsp. sepedonicus).